We begin with the raw amino-acid sequence, 424 residues long: Serine--tRNA ligase (424 aa).

Thr-233 to Glu-235 contacts L-serine. Position 264-266 (Arg-264–Glu-266) interacts with ATP. Glu-287 lines the L-serine pocket. ATP is bound at residue Glu-351–Ser-354. Residue Ser-387 participates in L-serine binding.

It belongs to the class-II aminoacyl-tRNA synthetase family. Type-1 seryl-tRNA synthetase subfamily. In terms of assembly, homodimer. The tRNA molecule binds across the dimer.

It is found in the cytoplasm. It carries out the reaction tRNA(Ser) + L-serine + ATP = L-seryl-tRNA(Ser) + AMP + diphosphate + H(+). The catalysed reaction is tRNA(Sec) + L-serine + ATP = L-seryl-tRNA(Sec) + AMP + diphosphate + H(+). It participates in aminoacyl-tRNA biosynthesis; selenocysteinyl-tRNA(Sec) biosynthesis; L-seryl-tRNA(Sec) from L-serine and tRNA(Sec): step 1/1. In terms of biological role, catalyzes the attachment of serine to tRNA(Ser). Is also able to aminoacylate tRNA(Sec) with serine, to form the misacylated tRNA L-seryl-tRNA(Sec), which will be further converted into selenocysteinyl-tRNA(Sec). The chain is Serine--tRNA ligase from Acaryochloris marina (strain MBIC 11017).